A 341-amino-acid polypeptide reads, in one-letter code: Serine/threonine-protein kinase pdik1l (341 aa).

In terms of domain architecture, Protein kinase spans 8-332 (YELIQEVGRG…FELELRLVRI (325 aa)). 14–22 (VGRGSYGVV) contributes to the ATP binding site. The active-site Proton acceptor is the Asp164.

It belongs to the protein kinase superfamily. Ser/Thr protein kinase family.

It is found in the nucleus. It carries out the reaction L-seryl-[protein] + ATP = O-phospho-L-seryl-[protein] + ADP + H(+). The catalysed reaction is L-threonyl-[protein] + ATP = O-phospho-L-threonyl-[protein] + ADP + H(+). This Danio rerio (Zebrafish) protein is Serine/threonine-protein kinase pdik1l (pdik1l).